The chain runs to 169 residues: Transmembrane protein B169L (169 aa).

Helical transmembrane passes span 28–48 (NPFIVALIITAVVLVVFFAIC) and 60–80 (TAIYVYICIVALLFLHYYVLN). A glycan (N-linked (GlcNAc...) asparagine; by host) is linked at asparagine 88. Residues 107 to 169 (DEIIPPISPP…EVIMPSQYNN (63 aa)) form a disordered region. Residues 140-154 (KPADSKPASSADSKP) are compositionally biased toward low complexity.

Belongs to the asfivirus B169L family.

The protein localises to the host membrane. It is found in the virion. The chain is Transmembrane protein B169L from Ornithodoros (relapsing fever ticks).